The following is an 80-amino-acid chain: MPKPPLRDKVMKKKICIFCKEKNTQINYKDTTLLRKYVSDRGKIRARRVTGNCVQHQRDVAIAVKNSREVALLPYATVAR.

It belongs to the bacterial ribosomal protein bS18 family. In terms of assembly, part of the 30S ribosomal subunit. Forms a tight heterodimer with protein bS6.

Binds as a heterodimer with protein bS6 to the central domain of the 16S rRNA, where it helps stabilize the platform of the 30S subunit. In Rhodococcus jostii (strain RHA1), this protein is Small ribosomal subunit protein bS18A.